The chain runs to 140 residues: ATP synthase epsilon chain (140 aa).

This sequence belongs to the ATPase epsilon chain family. F-type ATPases have 2 components, CF(1) - the catalytic core - and CF(0) - the membrane proton channel. CF(1) has five subunits: alpha(3), beta(3), gamma(1), delta(1), epsilon(1). CF(0) has three main subunits: a, b and c.

The protein resides in the cell inner membrane. Functionally, produces ATP from ADP in the presence of a proton gradient across the membrane. In Legionella pneumophila (strain Lens), this protein is ATP synthase epsilon chain.